The following is a 149-amino-acid chain: MRCPFCAAEETKVVDSRLAADGYQIRRRRECTSCKERFTTFESAELVVPYVIKNNGNRVPSDANKLRVSLSRALEKRPVSADDLEKAISKIIIQLQSTGEREVPSKLVGSLAMDALKQLDKVAYIRFASVYLSFDDIEEFTKEIEKLRE.

The segment at 3-34 is a zinc-finger region; sequence CPFCAAEETKVVDSRLAADGYQIRRRRECTSC. The ATP-cone domain occupies 49-139; that stretch reads PYVIKNNGNR…VYLSFDDIEE (91 aa).

This sequence belongs to the NrdR family. Requires Zn(2+) as cofactor.

Negatively regulates transcription of bacterial ribonucleotide reductase nrd genes and operons by binding to NrdR-boxes. The chain is Transcriptional repressor NrdR from Actinobacillus pleuropneumoniae serotype 3 (strain JL03).